The primary structure comprises 606 residues: Double-stranded RNA-binding protein Staufen homolog 2 (606 aa).

2 DRBM domains span residues 8-75 (TPMC…ESSL) and 95-181 (TPTV…ALKN). Disordered stretches follow at residues 57–97 (SIKK…ITPT) and 177–205 (QALKNEPIPERPPQCSEEKKETEENSDAS). Residues 85-97 (ADSNSNPGSITPT) show a composition bias toward polar residues. A compositionally biased stretch (basic and acidic residues) spans 192–205 (SEEKKETEENSDAS). DRBM domains follow at residues 207–274 (SEIS…ELKK), 307–375 (NPIS…QLGY), and 493–557 (QPSQ…QLSE). The segment at 580 to 606 (RLAERTESKPTNSGTTAQDCKDSKAVV) is disordered. Polar residues predominate over residues 588-597 (KPTNSGTTAQ).

Its function is as follows. RNA-binding protein required for the microtubule-dependent transport of RNAs within polarized cell types. This chain is Double-stranded RNA-binding protein Staufen homolog 2 (stau2), found in Danio rerio (Zebrafish).